A 361-amino-acid chain; its full sequence is G2/mitotic-specific cyclin-B (361 aa).

This sequence belongs to the cyclin family. Cyclin AB subfamily.

Functionally, essential for the control of the cell cycle at the G2/M (mitosis) transition. Interacts with the CDC2 protein kinase to form MPF. G2/M cyclins accumulate steadily during G2 and are abruptly destroyed at mitosis. In Hydra vulgaris (Hydra), this protein is G2/mitotic-specific cyclin-B.